Reading from the N-terminus, the 542-residue chain is Glucose-6-phosphate isomerase (542 aa).

Residue glutamate 353 is the Proton donor of the active site. Catalysis depends on residues histidine 384 and lysine 508.

Belongs to the GPI family.

Its subcellular location is the cytoplasm. It catalyses the reaction alpha-D-glucose 6-phosphate = beta-D-fructose 6-phosphate. Its pathway is carbohydrate biosynthesis; gluconeogenesis. It participates in carbohydrate degradation; glycolysis; D-glyceraldehyde 3-phosphate and glycerone phosphate from D-glucose: step 2/4. Functionally, catalyzes the reversible isomerization of glucose-6-phosphate to fructose-6-phosphate. The sequence is that of Glucose-6-phosphate isomerase from Corynebacterium efficiens (strain DSM 44549 / YS-314 / AJ 12310 / JCM 11189 / NBRC 100395).